Consider the following 279-residue polypeptide: Putative pyruvate, phosphate dikinase regulatory protein (279 aa).

Residue 153–160 participates in ADP binding; the sequence is GISRTSKT.

It belongs to the pyruvate, phosphate/water dikinase regulatory protein family. PDRP subfamily.

The enzyme catalyses N(tele)-phospho-L-histidyl/L-threonyl-[pyruvate, phosphate dikinase] + ADP = N(tele)-phospho-L-histidyl/O-phospho-L-threonyl-[pyruvate, phosphate dikinase] + AMP + H(+). It catalyses the reaction N(tele)-phospho-L-histidyl/O-phospho-L-threonyl-[pyruvate, phosphate dikinase] + phosphate + H(+) = N(tele)-phospho-L-histidyl/L-threonyl-[pyruvate, phosphate dikinase] + diphosphate. Bifunctional serine/threonine kinase and phosphorylase involved in the regulation of the pyruvate, phosphate dikinase (PPDK) by catalyzing its phosphorylation/dephosphorylation. This Brucella melitensis biotype 2 (strain ATCC 23457) protein is Putative pyruvate, phosphate dikinase regulatory protein.